The following is a 72-amino-acid chain: Alpha-elapitoxin-Dpp2d (72 aa).

5 disulfides stabilise this stretch: Cys3–Cys21, Cys14–Cys42, Cys27–Cys31, Cys46–Cys57, and Cys58–Cys63. The residue at position 72 (Arg72) is an Arginine amide.

It belongs to the three-finger toxin family. Long-chain subfamily. Type II alpha-neurotoxin sub-subfamily. In terms of assembly, monomer (predominant). Amidation does not significantly affect toxin selectivity, since the activity profile and binding data are reminiscent of classical long-chain 3-finger toxins with a free carboxyl termini. As to expression, expressed by the venom gland.

The protein localises to the secreted. In terms of biological role, binds with high affinity to muscular (IC(50)=114 nM) and neuronal (alpha-7/CHRNA7) (IC(50)=58 nM) nicotinic acetylcholine receptor (nAChR) and inhibits acetylcholine from binding to the receptor, thereby impairing neuromuscular and neuronal transmission. Competitive radioligand binding assays also demonstrate that this toxin competes with epibatidine binding to the Lymnaea stagnalis acetylcholine-binding protein (Ls-AChBP) (IC(50)=4.9 nM). This chain is Alpha-elapitoxin-Dpp2d, found in Dendroaspis polylepis polylepis (Black mamba).